The sequence spans 648 residues: Probable ATP-dependent RNA helicase DDX43 (648 aa).

The interval 1–60 (MSHHGGAPKASTWVVASRRSSTVSRAPERRPAEELNRTGPEGYSVGRGGRWRGTSRPPEA) is disordered. Residues 10–25 (ASTWVVASRRSSTVSR) show a composition bias toward low complexity. The segment covering 26-36 (APERRPAEELN) has biased composition (basic and acidic residues). Residues 67–128 (ELPLCFALKS…AMQTKAKAVI (62 aa)) enclose the KH domain. The Q motif motif lies at 242 to 270 (TFDDAFQCYPEVMENIKKAGFQKPTPIQS). In terms of domain architecture, Helicase ATP-binding spans 273–448 (WPIVLQGIDL…QSYLKEPMIV (176 aa)). Residue 286–293 (AQTGTGKT) participates in ATP binding. A DEAD box motif is present at residues 396 to 399 (DEAD). Residues 460–621 (SVKQNIIVTT…SIPEELVSMA (162 aa)) form the Helicase C-terminal domain. Residues 628-641 (QQKREMERKMERPQ) show a composition bias toward basic and acidic residues. Residues 628–648 (QQKREMERKMERPQGRPKKFH) form a disordered region.

The protein belongs to the DEAD box helicase family. In terms of tissue distribution, expressed in testis. Expressed in many tumors of various histological types at a level that is 100-fold higher than the level observed in normal tissues except testis.

It catalyses the reaction ATP + H2O = ADP + phosphate + H(+). This Homo sapiens (Human) protein is Probable ATP-dependent RNA helicase DDX43 (DDX43).